The sequence spans 121 residues: Copper transport protein CCH (121 aa).

N-acetylalanine is present on Ala2. Positions 2-65 (AQTVVLKVGM…TVSKTGKKTS (64 aa)) constitute an HMA domain. 2 residues coordinate Cu cation: Cys13 and Cys16. Residues 70–121 (EAEAEPKAEADPKVETVTETKTEAETKTEAKVDAKADVEPKAAEAETKPSQV) form a disordered region. Residues 73-121 (AEPKAEADPKVETVTETKTEAETKTEAKVDAKADVEPKAAEAETKPSQV) show a composition bias toward basic and acidic residues.

The protein belongs to the ATX1 family. Cu cation serves as cofactor. As to expression, expressed in phloem (at protein level).

Its function is as follows. Involved in copper homeostasis. Can complement the yeast mutants atx1 and sod1. The sequence is that of Copper transport protein CCH (CCH) from Arabidopsis thaliana (Mouse-ear cress).